A 430-amino-acid polypeptide reads, in one-letter code: Protein AST2 (430 aa).

In terms of biological role, lipid raft-associated protein involved in the targeting of PMA1 from Golgi to the plasma membrane. May induce clustering of PMA1, which facilitates partition of PMA1 into lipid rafts after leaving the ER its and transport to the cell surface. This is Protein AST2 from Saccharomyces cerevisiae (strain ATCC 204508 / S288c) (Baker's yeast).